Consider the following 210-residue polypeptide: Leucyl/phenylalanyl-tRNA--protein transferase (210 aa).

Belongs to the L/F-transferase family.

It localises to the cytoplasm. It catalyses the reaction N-terminal L-lysyl-[protein] + L-leucyl-tRNA(Leu) = N-terminal L-leucyl-L-lysyl-[protein] + tRNA(Leu) + H(+). The catalysed reaction is N-terminal L-arginyl-[protein] + L-leucyl-tRNA(Leu) = N-terminal L-leucyl-L-arginyl-[protein] + tRNA(Leu) + H(+). The enzyme catalyses L-phenylalanyl-tRNA(Phe) + an N-terminal L-alpha-aminoacyl-[protein] = an N-terminal L-phenylalanyl-L-alpha-aminoacyl-[protein] + tRNA(Phe). In terms of biological role, functions in the N-end rule pathway of protein degradation where it conjugates Leu, Phe and, less efficiently, Met from aminoacyl-tRNAs to the N-termini of proteins containing an N-terminal arginine or lysine. The sequence is that of Leucyl/phenylalanyl-tRNA--protein transferase from Ruegeria sp. (strain TM1040) (Silicibacter sp.).